Reading from the N-terminus, the 257-residue chain is K88 minor fimbrial subunit FaeJ (257 aa).

A signal peptide spans 1–26 (MLNIIHRLKSGMFPALFFLTSASVLA).

It localises to the fimbrium. Functionally, K88 minor fimbrial subunit, plays an essential role in the biogenesis of the K88 fimbriae. Fimbriae (also called pili), are polar filaments radiating from the surface of the bacterium to a length of 0.5-1.5 micrometers and numbering 100-300 per cell. They enable bacteria to colonize the epithelium of specific host organs. In Escherichia coli, this protein is K88 minor fimbrial subunit FaeJ (faeJ).